The primary structure comprises 530 residues: Metal transporter Nramp5 (530 aa).

Polar residues predominate over residues 1–10 (MTGSTVSRQE). The disordered stretch occupies residues 1-53 (MTGSTVSRQENSPKRPNDSNGEFKRLLVPETSQPEEDELHESPPENQILNVEE). Basic and acidic residues predominate over residues 11-27 (NSPKRPNDSNGEFKRLL). 12 consecutive transmembrane segments (helical) span residues 65–85 (FSWA…IAFL), 98–118 (AVAG…GLLM), 147–167 (ILLW…EVIG), 179–199 (FLPI…ISYL), 207–227 (LEGL…WMFN), 253–273 (AVGV…SALV), 299–319 (AALF…AKGF), 341–361 (YGGG…AAGQ), 387–407 (LSAF…AIMF), 429–449 (IPFA…MGVF), 458–478 (LAWT…LDFF), and 485–505 (FLVG…IIYL).

Belongs to the NRAMP (TC 2.A.55) family.

The protein localises to the membrane. Functionally, seems to be involved in iron uptake. The protein is Metal transporter Nramp5 (NRAMP5) of Arabidopsis thaliana (Mouse-ear cress).